The primary structure comprises 768 residues: Cullin-3-A (768 aa).

The interval 677–698 is disordered; it reads VAAKQGESDPERKETRQKVDDD. The segment covering 682–698 has biased composition (basic and acidic residues); that stretch reads GESDPERKETRQKVDDD. A Cullin neddylation domain is found at 698–760; that stretch reads DRKHEIEAAI…REYLARTPED (63 aa). Residue Lys-712 forms a Glycyl lysine isopeptide (Lys-Gly) (interchain with G-Cter in NEDD8) linkage.

The protein belongs to the cullin family. As to quaternary structure, component of multiple BCR (BTB-CUL3-RBX1) E3 ubiquitin-protein ligase complexes formed of cul3, rbx1 and a variable BTB domain-containing protein acting as both, adapter to cullin and substrate recognition subunit. Interacts with btbd6. In terms of processing, neddylated. Attachment of NEDD8 is required for the E3 ubiquitin-protein ligase activity of the SCF-like complex.

It is found in the nucleus. It functions in the pathway protein modification; protein ubiquitination. In terms of biological role, probable core component of cullin-based SCF-like E3 ubiquitin-protein ligase complexes which mediate the ubiquitination and subsequent proteasomal degradation of target proteins. The E3 ubiquitin-protein ligase activity of the complex is dependent on the neddylation of the cullin subunit. Involved in ER-Golgi transport by regulating the size of COPII coats, thereby playing a key role in collagen export, which is required for embryonic stem (ES) cells division. May play a role in the regulation of mittotic entry via ubiquitination of aurka. The sequence is that of Cullin-3-A (cul3a) from Xenopus laevis (African clawed frog).